A 132-amino-acid polypeptide reads, in one-letter code: uncharacterized protein (132 aa).

A signal peptide spans 1–18 (MRKIISMLFIPLFIFAMA).

This is an uncharacterized protein from Aquifex aeolicus (strain VF5).